The sequence spans 315 residues: B3 domain-containing protein At1g05920 (315 aa).

The disordered stretch occupies residues 24 to 129; it reads MISRDNQKKT…PQVASVPKSV (106 aa). 3 stretches are compositionally biased toward basic and acidic residues: residues 39 to 51, 66 to 83, and 100 to 114; these read VREEKGKRREEMI, KEGKGKRREEMISRDNRT, and FDHVPRGTREPHAYL. The TF-B3 DNA-binding region spans 204–306; the sequence is INTVIQNDFL…ILCFALVPPT (103 aa).

It localises to the nucleus. This chain is B3 domain-containing protein At1g05920, found in Arabidopsis thaliana (Mouse-ear cress).